We begin with the raw amino-acid sequence, 293 residues long: 4-hydroxy-tetrahydrodipicolinate synthase (293 aa).

A pyruvate-binding site is contributed by Thr44. Tyr132 acts as the Proton donor/acceptor in catalysis. Catalysis depends on Lys160, which acts as the Schiff-base intermediate with substrate. Position 204 (Ile204) interacts with pyruvate.

Belongs to the DapA family. In terms of assembly, homotetramer; dimer of dimers.

It is found in the cytoplasm. It carries out the reaction L-aspartate 4-semialdehyde + pyruvate = (2S,4S)-4-hydroxy-2,3,4,5-tetrahydrodipicolinate + H2O + H(+). The protein operates within amino-acid biosynthesis; L-lysine biosynthesis via DAP pathway; (S)-tetrahydrodipicolinate from L-aspartate: step 3/4. In terms of biological role, catalyzes the condensation of (S)-aspartate-beta-semialdehyde [(S)-ASA] and pyruvate to 4-hydroxy-tetrahydrodipicolinate (HTPA). The sequence is that of 4-hydroxy-tetrahydrodipicolinate synthase from Hyphomonas neptunium (strain ATCC 15444).